Consider the following 156-residue polypeptide: 6,7-dimethyl-8-ribityllumazine synthase (156 aa).

5-amino-6-(D-ribitylamino)uracil-binding positions include F25, 59–61 (AWE), and 83–85 (AVI). 88 to 89 (ST) contacts (2S)-2-hydroxy-3-oxobutyl phosphate. H91 serves as the catalytic Proton donor. N116 serves as a coordination point for 5-amino-6-(D-ribitylamino)uracil. R130 serves as a coordination point for (2S)-2-hydroxy-3-oxobutyl phosphate.

It belongs to the DMRL synthase family. Forms an icosahedral capsid composed of 60 subunits, arranged as a dodecamer of pentamers.

It carries out the reaction (2S)-2-hydroxy-3-oxobutyl phosphate + 5-amino-6-(D-ribitylamino)uracil = 6,7-dimethyl-8-(1-D-ribityl)lumazine + phosphate + 2 H2O + H(+). It functions in the pathway cofactor biosynthesis; riboflavin biosynthesis; riboflavin from 2-hydroxy-3-oxobutyl phosphate and 5-amino-6-(D-ribitylamino)uracil: step 1/2. Catalyzes the formation of 6,7-dimethyl-8-ribityllumazine by condensation of 5-amino-6-(D-ribitylamino)uracil with 3,4-dihydroxy-2-butanone 4-phosphate. This is the penultimate step in the biosynthesis of riboflavin. This chain is 6,7-dimethyl-8-ribityllumazine synthase, found in Acinetobacter baylyi (strain ATCC 33305 / BD413 / ADP1).